The following is a 325-amino-acid chain: Ribonuclease Z (325 aa).

Residues His-63, His-65, Asp-67, His-68, His-147, Asp-218, and His-276 each contribute to the Zn(2+) site. Asp-67 (proton acceptor) is an active-site residue.

It belongs to the RNase Z family. In terms of assembly, homodimer. It depends on Zn(2+) as a cofactor.

It catalyses the reaction Endonucleolytic cleavage of RNA, removing extra 3' nucleotides from tRNA precursor, generating 3' termini of tRNAs. A 3'-hydroxy group is left at the tRNA terminus and a 5'-phosphoryl group is left at the trailer molecule.. In terms of biological role, zinc phosphodiesterase, which displays some tRNA 3'-processing endonuclease activity. Probably involved in tRNA maturation, by removing a 3'-trailer from precursor tRNA. The polypeptide is Ribonuclease Z (Oenococcus oeni (strain ATCC BAA-331 / PSU-1)).